The following is a 428-amino-acid chain: Enolase (428 aa).

Q163 provides a ligand contact to (2R)-2-phosphoglycerate. E205 functions as the Proton donor in the catalytic mechanism. Mg(2+) is bound by residues D242, E285, and D312. The (2R)-2-phosphoglycerate site is built by K337, R366, S367, and K388. Catalysis depends on K337, which acts as the Proton acceptor.

This sequence belongs to the enolase family. Mg(2+) is required as a cofactor.

The protein localises to the cytoplasm. The protein resides in the secreted. Its subcellular location is the cell surface. It catalyses the reaction (2R)-2-phosphoglycerate = phosphoenolpyruvate + H2O. It participates in carbohydrate degradation; glycolysis; pyruvate from D-glyceraldehyde 3-phosphate: step 4/5. Functionally, catalyzes the reversible conversion of 2-phosphoglycerate (2-PG) into phosphoenolpyruvate (PEP). It is essential for the degradation of carbohydrates via glycolysis. The sequence is that of Enolase from Carboxydothermus hydrogenoformans (strain ATCC BAA-161 / DSM 6008 / Z-2901).